The sequence spans 413 residues: Inactive squalene synthase 2 (413 aa).

Gly-2 bears the N-acetylglycine mark. A run of 2 helical transmembrane segments spans residues 283-303 (AIFQ…ALCY) and 390-410 (AIFV…LKAN).

Belongs to the phytoene/squalene synthase family. Requires Mg(2+) as cofactor. Mn(2+) is required as a cofactor. In terms of tissue distribution, mostly expressed in hypocotyls, leaves and cotyledons, and, to a lower extent, in stems.

It localises to the endoplasmic reticulum membrane. In Arabidopsis thaliana (Mouse-ear cress), this protein is Inactive squalene synthase 2.